Reading from the N-terminus, the 70-residue chain is uncharacterized protein (70 aa).

This is an uncharacterized protein from Sinorhizobium fredii (strain NBRC 101917 / NGR234).